We begin with the raw amino-acid sequence, 198 residues long: Recombination protein RecR (198 aa).

The C4-type zinc finger occupies 57 to 72 (CSTCQTLTDQDPCAIC). A Toprim domain is found at 80–175 (RMICVVEGVP…KVTRIAQGVP (96 aa)).

This sequence belongs to the RecR family.

Functionally, may play a role in DNA repair. It seems to be involved in an RecBC-independent recombinational process of DNA repair. It may act with RecF and RecO. This Anaeromyxobacter dehalogenans (strain 2CP-C) protein is Recombination protein RecR.